Reading from the N-terminus, the 252-residue chain is 5'-nucleotidase SurE (252 aa).

4 residues coordinate a divalent metal cation: Asp-8, Asp-9, Ser-39, and Asn-91.

This sequence belongs to the SurE nucleotidase family. A divalent metal cation is required as a cofactor.

The protein localises to the cytoplasm. The enzyme catalyses a ribonucleoside 5'-phosphate + H2O = a ribonucleoside + phosphate. In terms of biological role, nucleotidase that shows phosphatase activity on nucleoside 5'-monophosphates. The polypeptide is 5'-nucleotidase SurE (Gemmatimonas aurantiaca (strain DSM 14586 / JCM 11422 / NBRC 100505 / T-27)).